We begin with the raw amino-acid sequence, 396 residues long: S-adenosylmethionine synthase (396 aa).

An ATP-binding site is contributed by histidine 16. Residue aspartate 18 coordinates Mg(2+). Residue glutamate 44 participates in K(+) binding. L-methionine is bound by residues glutamate 57 and glutamine 100. The interval glutamine 100–arginine 110 is flexible loop. ATP is bound by residues aspartate 167 to lysine 169, arginine 233 to phenylalanine 234, aspartate 242, arginine 248 to lysine 249, alanine 265, and lysine 269. Aspartate 242 serves as a coordination point for L-methionine. Residue lysine 273 coordinates L-methionine.

It belongs to the AdoMet synthase family. In terms of assembly, homotetramer; dimer of dimers. Mg(2+) serves as cofactor. K(+) is required as a cofactor.

It localises to the cytoplasm. The catalysed reaction is L-methionine + ATP + H2O = S-adenosyl-L-methionine + phosphate + diphosphate. It functions in the pathway amino-acid biosynthesis; S-adenosyl-L-methionine biosynthesis; S-adenosyl-L-methionine from L-methionine: step 1/1. Catalyzes the formation of S-adenosylmethionine (AdoMet) from methionine and ATP. The overall synthetic reaction is composed of two sequential steps, AdoMet formation and the subsequent tripolyphosphate hydrolysis which occurs prior to release of AdoMet from the enzyme. The protein is S-adenosylmethionine synthase of Paraburkholderia xenovorans (strain LB400).